Here is a 543-residue protein sequence, read N- to C-terminus: CTP synthase (543 aa).

Positions Met-1–Ile-270 are amidoligase domain. CTP is bound at residue Ser-18. Ser-18 lines the UTP pocket. Residues Ser-19–Leu-24 and Asp-76 each bind ATP. 2 residues coordinate Mg(2+): Asp-76 and Glu-144. CTP-binding positions include Asp-151 to Glu-153, Lys-191 to Gln-196, and Lys-227. Residues Lys-191 to Gln-196 and Lys-227 each bind UTP. The Glutamine amidotransferase type-1 domain occupies Thr-295–Thr-537. Gly-356 is an L-glutamine binding site. Cys-383 serves as the catalytic Nucleophile; for glutamine hydrolysis. Residues Met-384–Gln-387, Glu-407, and Arg-462 contribute to the L-glutamine site. Catalysis depends on residues His-510 and Glu-512.

This sequence belongs to the CTP synthase family. As to quaternary structure, homotetramer.

It carries out the reaction UTP + L-glutamine + ATP + H2O = CTP + L-glutamate + ADP + phosphate + 2 H(+). It catalyses the reaction L-glutamine + H2O = L-glutamate + NH4(+). The enzyme catalyses UTP + NH4(+) + ATP = CTP + ADP + phosphate + 2 H(+). It participates in pyrimidine metabolism; CTP biosynthesis via de novo pathway; CTP from UDP: step 2/2. Allosterically activated by GTP, when glutamine is the substrate; GTP has no effect on the reaction when ammonia is the substrate. The allosteric effector GTP functions by stabilizing the protein conformation that binds the tetrahedral intermediate(s) formed during glutamine hydrolysis. Inhibited by the product CTP, via allosteric rather than competitive inhibition. Its function is as follows. Catalyzes the ATP-dependent amination of UTP to CTP with either L-glutamine or ammonia as the source of nitrogen. Regulates intracellular CTP levels through interactions with the four ribonucleotide triphosphates. The polypeptide is CTP synthase (Ehrlichia ruminantium (strain Gardel)).